Consider the following 157-residue polypeptide: Endoribonuclease YbeY (157 aa).

The Zn(2+) site is built by H114, H118, and H124.

This sequence belongs to the endoribonuclease YbeY family. Zn(2+) is required as a cofactor.

It is found in the cytoplasm. In terms of biological role, single strand-specific metallo-endoribonuclease involved in late-stage 70S ribosome quality control and in maturation of the 3' terminus of the 16S rRNA. This chain is Endoribonuclease YbeY, found in Yersinia pseudotuberculosis serotype O:1b (strain IP 31758).